Here is a 99-residue protein sequence, read N- to C-terminus: Small integral membrane protein 14 (99 aa).

The Lumenal segment spans residues 1-49 (MAEGGFDPCECVCSHEHAMRRLINLLRQSQSYCTDTECLRELPGPSSDS). Residues 50–70 (GISITVILMAWMVIAMLLFLL) traverse the membrane as a helical segment. Over 71 to 99 (RPPNLRGSSLPGKPSSPHSGQDPPAPPVD) the chain is Cytoplasmic. A disordered region spans residues 77–99 (GSSLPGKPSSPHSGQDPPAPPVD).

Ubiquitously expressed.

The protein resides in the endoplasmic reticulum membrane. The polypeptide is Small integral membrane protein 14 (Smim14) (Mus musculus (Mouse)).